Reading from the N-terminus, the 127-residue chain is Glycine cleavage system H protein (127 aa).

In terms of domain architecture, Lipoyl-binding spans 22 to 104 (KVRIGITDFA…YEKAWMIVVE (83 aa)). An N6-lipoyllysine modification is found at Lys63.

It belongs to the GcvH family. The glycine cleavage system is composed of four proteins: P, T, L and H. The cofactor is (R)-lipoate.

Functionally, the glycine cleavage system catalyzes the degradation of glycine. The H protein shuttles the methylamine group of glycine from the P protein to the T protein. Its function is as follows. Is also involved in protein lipoylation via its role as an octanoyl/lipoyl carrier protein intermediate. This is Glycine cleavage system H protein from Geobacillus sp. (strain WCH70).